The sequence spans 133 residues: MGLTSQLIPTLVCLLVCTSNFAHGHKCDITLQEIIKTLNTLTARKNSCMELTVADVFAAPKNTTEKETFCKAATALRHIYRHHNCLSKHLSGLDRNLSGLANTTCSVNDSKKSTLRDFLERLKKIMKEKYSKC.

An N-terminal signal peptide occupies residues 1 to 24; that stretch reads MGLTSQLIPTLVCLLVCTSNFAHG. 3 disulfide bridges follow: C27–C133, C48–C85, and C70–C105. 4 N-linked (GlcNAc...) asparagine glycosylation sites follow: N62, N96, N102, and N108.

Belongs to the IL-4/IL-13 family.

The protein localises to the secreted. Functionally, participates in at least several B-cell activation processes as well as of other cell types. It is a costimulator of DNA-synthesis. It induces the expression of class II MHC molecules on resting B-cells. It enhances both secretion and cell surface expression of IgE and IgG1. It also regulates the expression of the low affinity Fc receptor for IgE (CD23) on both lymphocytes and monocytes. Positively regulates IL31RA expression in macrophages. Stimulates autophagy in dendritic cells by interfering with mTORC1 signaling and through the induction of RUFY4. This Lama glama (Llama) protein is Interleukin-4 (IL4).